We begin with the raw amino-acid sequence, 304 residues long: UDP-N-acetylenolpyruvoylglucosamine reductase (304 aa).

Positions 33-198 (KVGGPVDILL…LRATFNLVNG (166 aa)) constitute an FAD-binding PCMH-type domain. Arginine 177 is a catalytic residue. Serine 227 functions as the Proton donor in the catalytic mechanism. The active site involves glutamate 297.

The protein belongs to the MurB family. The cofactor is FAD.

The protein resides in the cytoplasm. The catalysed reaction is UDP-N-acetyl-alpha-D-muramate + NADP(+) = UDP-N-acetyl-3-O-(1-carboxyvinyl)-alpha-D-glucosamine + NADPH + H(+). The protein operates within cell wall biogenesis; peptidoglycan biosynthesis. Functionally, cell wall formation. The chain is UDP-N-acetylenolpyruvoylglucosamine reductase from Clostridium beijerinckii (strain ATCC 51743 / NCIMB 8052) (Clostridium acetobutylicum).